We begin with the raw amino-acid sequence, 263 residues long: Small ribosomal subunit protein eS4 (263 aa).

The 63-residue stretch at 42 to 104 (LPLIIFLRNR…TGEHFRLVYD (63 aa)) folds into the S4 RNA-binding domain.

Belongs to the eukaryotic ribosomal protein eS4 family.

The chain is Small ribosomal subunit protein eS4 (RPS4) from Gallus gallus (Chicken).